The chain runs to 224 residues: Phosphoribosylformylglycinamidine synthase subunit PurQ (224 aa).

The Glutamine amidotransferase type-1 domain maps to 4-224 (RIGIITFPGT…YSVLDGVLAG (221 aa)). Cys-87 (nucleophile) is an active-site residue. Residues His-195 and Glu-197 contribute to the active site.

In terms of assembly, part of the FGAM synthase complex composed of 1 PurL, 1 PurQ and 2 PurS subunits.

It localises to the cytoplasm. It catalyses the reaction N(2)-formyl-N(1)-(5-phospho-beta-D-ribosyl)glycinamide + L-glutamine + ATP + H2O = 2-formamido-N(1)-(5-O-phospho-beta-D-ribosyl)acetamidine + L-glutamate + ADP + phosphate + H(+). The catalysed reaction is L-glutamine + H2O = L-glutamate + NH4(+). It functions in the pathway purine metabolism; IMP biosynthesis via de novo pathway; 5-amino-1-(5-phospho-D-ribosyl)imidazole from N(2)-formyl-N(1)-(5-phospho-D-ribosyl)glycinamide: step 1/2. Part of the phosphoribosylformylglycinamidine synthase complex involved in the purines biosynthetic pathway. Catalyzes the ATP-dependent conversion of formylglycinamide ribonucleotide (FGAR) and glutamine to yield formylglycinamidine ribonucleotide (FGAM) and glutamate. The FGAM synthase complex is composed of three subunits. PurQ produces an ammonia molecule by converting glutamine to glutamate. PurL transfers the ammonia molecule to FGAR to form FGAM in an ATP-dependent manner. PurS interacts with PurQ and PurL and is thought to assist in the transfer of the ammonia molecule from PurQ to PurL. The chain is Phosphoribosylformylglycinamidine synthase subunit PurQ from Mycolicibacterium paratuberculosis (strain ATCC BAA-968 / K-10) (Mycobacterium paratuberculosis).